The following is a 346-amino-acid chain: tRNA N6-adenosine threonylcarbamoyltransferase (346 aa).

Fe cation contacts are provided by His111 and His115. Substrate-binding positions include 134-138 (LVSGG), Asp167, Gly180, and Asn279. Asp307 serves as a coordination point for Fe cation.

The protein belongs to the KAE1 / TsaD family. The cofactor is Fe(2+).

Its subcellular location is the cytoplasm. The enzyme catalyses L-threonylcarbamoyladenylate + adenosine(37) in tRNA = N(6)-L-threonylcarbamoyladenosine(37) in tRNA + AMP + H(+). Functionally, required for the formation of a threonylcarbamoyl group on adenosine at position 37 (t(6)A37) in tRNAs that read codons beginning with adenine. Is involved in the transfer of the threonylcarbamoyl moiety of threonylcarbamoyl-AMP (TC-AMP) to the N6 group of A37, together with TsaE and TsaB. TsaD likely plays a direct catalytic role in this reaction. The sequence is that of tRNA N6-adenosine threonylcarbamoyltransferase from Burkholderia cenocepacia (strain HI2424).